Consider the following 522-residue polypeptide: Sorting nexin-1 (522 aa).

A disordered region spans residues Met1–Gln142. Ser32 and Ser39 each carry phosphoserine. Over residues Glu35–Asp45 the composition is skewed to acidic residues. Phosphothreonine is present on residues Thr41 and Thr48. 2 positions are modified to phosphoserine: Ser58 and Ser72. Residues Glu132–Gln142 are compositionally biased toward acidic residues. A PX domain is found at Phe143–Arg272. Positions 186, 188, and 214 each coordinate a 1,2-diacyl-sn-glycero-3-phospho-(1D-myo-inositol-3-phosphate). Ser188 is subject to Phosphoserine. N6-acetyllysine is present on Lys237. An a 1,2-diacyl-sn-glycero-3-phospho-(1D-myo-inositol-3-phosphate)-binding site is contributed by Arg238. Ser280 is modified (phosphoserine). Residues Gly281 to Met298 form a membrane-binding amphipathic helix region. Positions Met302–Ser522 constitute a BAR domain.

Belongs to the sorting nexin family. Predominantly forms heterodimers with BAR domain-containing sorting nexins SNX5, SNX6 and SNX32; can self-associate to form homodimers. The heterodimers are proposed to self-assemble into helical arrays on the membrane to stabilize and expand local membrane curvature underlying endosomal tubule formation. Thought to be a component of the originally described retromer complex (also called SNX-BAR retromer) which is a pentamer containing the heterotrimeric retromer cargo-selective complex (CSC), also described as vacuolar protein sorting subcomplex (VPS) and a heterodimeric membrane-deforming subcomplex formed between SNX1 or SNX2 and SNX5 or SNX6 (also called SNX-BAR subcomplex); the respective CSC and SNX-BAR subcomplexes associate with low affinity. Interacts with SNX5, SNX6, SNX32, VPS26A, VPS29, VPS35, DRD5, DENND5A, KALRN, RHOG (GDP-bound form). The interaction with SNX2 is reported controversially. Interacts with DNAJC13; prevented by presence of HGS. Interacts with HGS.

The protein resides in the endosome membrane. Its subcellular location is the golgi apparatus. It is found in the trans-Golgi network membrane. It localises to the early endosome membrane. The protein localises to the cell projection. The protein resides in the lamellipodium. Involved in several stages of intracellular trafficking. Interacts with membranes containing phosphatidylinositol 3-phosphate (PtdIns(3P)) or phosphatidylinositol 3,5-bisphosphate (PtdIns(3,5)P2). Acts in part as component of the retromer membrane-deforming SNX-BAR subcomplex. The SNX-BAR retromer mediates retrograde transport of cargo proteins from endosomes to the trans-Golgi network (TGN) and is involved in endosome-to-plasma membrane transport for cargo protein recycling. The SNX-BAR subcomplex functions to deform the donor membrane into a tubular profile called endosome-to-TGN transport carrier (ETC). Can sense membrane curvature and has in vitro vesicle-to-membrane remodeling activity. Involved in retrograde endosome-to-TGN transport of lysosomal enzyme receptors (IGF2R, M6PR and SORT1). Plays a role in targeting ligand-activated EGFR to the lysosomes for degradation after endocytosis from the cell surface and release from the Golgi. Involvement in retromer-independent endocytic trafficking of P2RY1 and lysosomal degradation of protease-activated receptor-1/F2R. Promotes KALRN- and RHOG-dependent but retromer-independent membrane remodeling such as lamellipodium formation; the function is dependent on GEF activity of KALRN. Required for endocytosis of DRD5 upon agonist stimulation but not for basal receptor trafficking. In Bos taurus (Bovine), this protein is Sorting nexin-1 (SNX1).